Here is a 262-residue protein sequence, read N- to C-terminus: Tetrahydromethanopterin S-methyltransferase subunit C (262 aa).

The next 7 membrane-spanning stretches (helical) occupy residues 27–47, 72–92, 98–118, 145–165, 173–193, 200–220, and 222–242; these read LVGIYIAHFFPSLAMLLGGLL, PSIGMVSLGMGTISALAGVLI, LPVLVTPILAAVIAVVVGFIV, ALAILGFCTAFAGGFSADIII, VIALAFIAAGMAILHPFNACI, KRTMTLAVACGFMAWLVFAIA, and LDIVSTAVAAIFWFIAYGTFV.

Belongs to the MtrC family. As to quaternary structure, the complex is composed of 8 subunits; MtrA, MtrB, MtrC, MtrD, MtrE, MtrF, MtrG and MtrH.

The protein localises to the cell membrane. It carries out the reaction 5-methyl-5,6,7,8-tetrahydromethanopterin + coenzyme M + 2 Na(+)(in) = 5,6,7,8-tetrahydromethanopterin + methyl-coenzyme M + 2 Na(+)(out). It participates in one-carbon metabolism; methanogenesis from CO(2); methyl-coenzyme M from 5,10-methylene-5,6,7,8-tetrahydromethanopterin: step 2/2. Part of a complex that catalyzes the formation of methyl-coenzyme M and tetrahydromethanopterin from coenzyme M and methyl-tetrahydromethanopterin. This is an energy-conserving, sodium-ion translocating step. The sequence is that of Tetrahydromethanopterin S-methyltransferase subunit C from Methanococcus maripaludis (strain C5 / ATCC BAA-1333).